The following is a 62-amino-acid chain: Ferredoxin-1 (62 aa).

4Fe-4S ferredoxin-type domains lie at 2–28 (ALYITEECTYCGACEPECPTNAISAGS) and 29–62 (EIYVIDAASCNECAGFADSPACVAVCPAECIVQG). Residues C9, C12, C15, C19, C38, C41, C50, and C54 each coordinate [4Fe-4S] cluster.

It depends on [4Fe-4S] cluster as a cofactor.

Ferredoxins are iron-sulfur proteins that transfer electrons in a wide variety of metabolic reactions. The sequence is that of Ferredoxin-1 from Chlorobaculum tepidum (strain ATCC 49652 / DSM 12025 / NBRC 103806 / TLS) (Chlorobium tepidum).